A 400-amino-acid chain; its full sequence is Argininosuccinate synthase (400 aa).

8 to 16 lines the ATP pocket; the sequence is AYSGGLDTS. Tyr87 contributes to the L-citrulline binding site. Residue Gly117 participates in ATP binding. L-aspartate is bound by residues Thr119, Asn123, and Asp124. Asn123 is a binding site for L-citrulline. Residues Arg127, Ser175, Glu260, and Tyr272 each coordinate L-citrulline.

It belongs to the argininosuccinate synthase family. Type 1 subfamily. In terms of assembly, homotetramer.

It localises to the cytoplasm. The enzyme catalyses L-citrulline + L-aspartate + ATP = 2-(N(omega)-L-arginino)succinate + AMP + diphosphate + H(+). It functions in the pathway amino-acid biosynthesis; L-arginine biosynthesis; L-arginine from L-ornithine and carbamoyl phosphate: step 2/3. In Mycolicibacterium vanbaalenii (strain DSM 7251 / JCM 13017 / BCRC 16820 / KCTC 9966 / NRRL B-24157 / PYR-1) (Mycobacterium vanbaalenii), this protein is Argininosuccinate synthase.